Reading from the N-terminus, the 335-residue chain is DNA-directed RNA polymerase subunit alpha (335 aa).

An alpha N-terminal domain (alpha-NTD) region spans residues 1 to 233 (MQRNWRELIK…DQLTIFINFE (233 aa)). The interval 249 to 335 (FNDHLFRSVD…DIENRRKEQE (87 aa)) is alpha C-terminal domain (alpha-CTD).

This sequence belongs to the RNA polymerase alpha chain family. Homodimer. The RNAP catalytic core consists of 2 alpha, 1 beta, 1 beta' and 1 omega subunit. When a sigma factor is associated with the core the holoenzyme is formed, which can initiate transcription.

It carries out the reaction RNA(n) + a ribonucleoside 5'-triphosphate = RNA(n+1) + diphosphate. Its function is as follows. DNA-dependent RNA polymerase catalyzes the transcription of DNA into RNA using the four ribonucleoside triphosphates as substrates. This is DNA-directed RNA polymerase subunit alpha from Syntrophobacter fumaroxidans (strain DSM 10017 / MPOB).